We begin with the raw amino-acid sequence, 349 residues long: Phosphoribosylformylglycinamidine cyclo-ligase (349 aa).

It belongs to the AIR synthase family.

It is found in the cytoplasm. The catalysed reaction is 2-formamido-N(1)-(5-O-phospho-beta-D-ribosyl)acetamidine + ATP = 5-amino-1-(5-phospho-beta-D-ribosyl)imidazole + ADP + phosphate + H(+). It functions in the pathway purine metabolism; IMP biosynthesis via de novo pathway; 5-amino-1-(5-phospho-D-ribosyl)imidazole from N(2)-formyl-N(1)-(5-phospho-D-ribosyl)glycinamide: step 2/2. This Listeria monocytogenes serotype 4b (strain CLIP80459) protein is Phosphoribosylformylglycinamidine cyclo-ligase.